Consider the following 177-residue polypeptide: Coatomer subunit zeta-1 (177 aa).

The protein belongs to the adaptor complexes small subunit family. Oligomeric complex that consists of at least the alpha, beta, beta', gamma, delta, epsilon and zeta subunits.

It localises to the cytoplasm. The protein resides in the golgi apparatus membrane. It is found in the cytoplasmic vesicle. Its subcellular location is the COPI-coated vesicle membrane. In terms of biological role, the coatomer is a cytosolic protein complex that binds to dilysine motifs and reversibly associates with Golgi non-clathrin-coated vesicles, which further mediate biosynthetic protein transport from the ER, via the Golgi up to the trans Golgi network. Coatomer complex is required for budding from Golgi membranes, and is essential for the retrograde Golgi-to-ER transport of dilysine-tagged proteins. The zeta subunit may be involved in regulating the coat assembly and, hence, the rate of biosynthetic protein transport due to its association-dissociation properties with the coatomer complex. This chain is Coatomer subunit zeta-1 (COPZ1), found in Oryza sativa subsp. japonica (Rice).